Consider the following 554-residue polypeptide: MAIQHPDIQPAVNHSVQVAIAGAGPVGLMMANYLGQMGIDVLVVEKLDKLIDYPRAIGIDDEALRTMQSVGLVDNVLPHTTPWHAMRFLTPKGRCFADIQPMTDEFGWPRRNAFIQPQVDAVMLEGLSRFPNVRCLFSRELEAFSQQDDEVTLHLKTEEGQRETVKAQWLVACDGGASFVRRTLNVPFEGKTAPNQWIVVDIANDPLSTPHIYLCCDPVRPYVSAALPHAVRRFEFMVMPGETEEQLREPQNMRKLLSKVLPNPDNVELIRQRVYTHNARLAQRFRIDRVLLAGDAAHIMPVWQGQGYNSGMRDAFNLAWKLALVIQGKARDALLDTYQQERRDHAKAMIDLSVTAGNVLAPPKRWQGTLRDGVSWLLNYLPPVKRYFLEMRFKPMPQYYGGALVREGEAKHSPVGKMFIQPKVTLENGDVTLLDNAIGANFAVIGWGCNPLWGMSDEQIQQWRALGTRFIQVVPEVQIHTAQDNHDGVLRVGDTQGRLRSWFAQHNASLVVMRPDRFVAATAIPQTLGKTLNKLASVMTLTRPDADVSVEKVA.

FAD contacts are provided by residues 17-46 and 285-295; these read QVAI…VVEK and FRIDRVLLAGD.

This sequence belongs to the PheA/TfdB FAD monooxygenase family. FAD serves as cofactor.

The enzyme catalyses 3-(3-hydroxyphenyl)propanoate + NADH + O2 + H(+) = 3-(2,3-dihydroxyphenyl)propanoate + NAD(+) + H2O. The catalysed reaction is (2E)-3-(3-hydroxyphenyl)prop-2-enoate + NADH + O2 + H(+) = (2E)-3-(2,3-dihydroxyphenyl)prop-2-enoate + NAD(+) + H2O. It functions in the pathway aromatic compound metabolism; 3-phenylpropanoate degradation. Functionally, catalyzes the insertion of one atom of molecular oxygen into position 2 of the phenyl ring of 3-(3-hydroxyphenyl)propionate (3-HPP) and hydroxycinnamic acid (3HCI). The polypeptide is 3-(3-hydroxy-phenyl)propionate/3-hydroxycinnamic acid hydroxylase (Escherichia coli O17:K52:H18 (strain UMN026 / ExPEC)).